Consider the following 224-residue polypeptide: Respiratory supercomplex factor 2, mitochondrial (224 aa).

At 1 to 13 (MKILTQDEIEAHR) the chain is on the mitochondrial intermembrane side. The chain crosses the membrane as a helical span at residues 14 to 38 (SHTLKGGIEGALAGFAISAIIFKVL). The Mitochondrial matrix segment spans residues 39–47 (PRRYPKFKP). A helical transmembrane segment spans residues 48–75 (STLTWSIKTALWITPPTVLTAICAEEAS). At 76 to 103 (NNFDATMYGSGSSSEDALDEHRRWKSLS) the chain is on the mitochondrial intermembrane side. The HIG1 domain occupies 89-180 (SEDALDEHRR…YENKLHPNKQ (92 aa)). The helical transmembrane segment at 104–133 (TKDKFVEGLSNNKYKIITGAWAASLYGSWV) threads the bilayer. Residues 134–142 (IVNKDPIMT) lie on the Mitochondrial matrix side of the membrane. The chain crosses the membrane as a helical span at residues 143 to 173 (KAQKIVQARMYAQFITVGLLLASVGLSMYEN). The Mitochondrial intermembrane segment spans residues 174-184 (KLHPNKQKVNE). Residues 185–204 (MRRWENALRVAEEEERLEKE) traverse the membrane as a helical segment. Residues 205–224 (GRRTGYVSNEERINSKIFKS) are Mitochondrial matrix-facing.

As to quaternary structure, associates with a subpopulation of the cytochrome bc1-cytochrome c oxidase supercomplexes. Associates in substoichiometric amounts with complex IV. Interacts with COX3.

It localises to the mitochondrion membrane. Functionally, assembly factor that plays a role in the assembly of the respiratory chain supercomplexes (SCs) composed of ubiquinol-cytochrome c oxidoreductase (cytochrome b-c1 complex, complex III, CIII) and cytochrome c oxidase (complex IV, CIV). May be required for late-stage assembly of the COX12 and COX13 subunits. Required for the generation and maintenance of a normal proton motive force (PMF) across the inner mitochondrial membrane (IMM) by preventing proton leakage through an inactive population of CIV that accumulates when RCF1 and/or RCF2 proteins are absent. The sequence is that of Respiratory supercomplex factor 2, mitochondrial (RCF2) from Saccharomyces cerevisiae (strain ATCC 204508 / S288c) (Baker's yeast).